Reading from the N-terminus, the 126-residue chain is Arginine decarboxylase proenzyme (126 aa).

Ser-74 serves as the catalytic Schiff-base intermediate with substrate; via pyruvic acid. Ser-74 carries the post-translational modification Pyruvic acid (Ser); by autocatalysis. His-79 (proton acceptor; for processing activity) is an active-site residue. Residue Cys-94 is the Proton donor; for catalytic activity of the active site.

The protein belongs to the prokaryotic AdoMetDC family. Type 1 subfamily. In terms of assembly, heterooctamer of four alpha and four beta chains arranged as a tetramer of alpha/beta heterodimers. The cofactor is pyruvate. Post-translationally, is synthesized initially as an inactive proenzyme. Formation of the active enzyme involves a self-maturation process in which the active site pyruvoyl group is generated from an internal serine residue via an autocatalytic post-translational modification. Two non-identical subunits are generated from the proenzyme in this reaction, and the pyruvate is formed at the N-terminus of the alpha chain, which is derived from the carboxyl end of the proenzyme. The post-translation cleavage follows an unusual pathway, termed non-hydrolytic serinolysis, in which the side chain hydroxyl group of the serine supplies its oxygen atom to form the C-terminus of the beta chain, while the remainder of the serine residue undergoes an oxidative deamination to produce ammonia and the pyruvoyl group blocking the N-terminus of the alpha chain.

The catalysed reaction is L-arginine + H(+) = agmatine + CO2. It functions in the pathway amine and polyamine biosynthesis; agmatine biosynthesis; agmatine from L-arginine: step 1/1. Specifically catalyzes the decarboxylation of L-arginine to agmatine. Has no S-adenosylmethionine decarboxylase (AdoMetDC) activity. This Pyrobaculum calidifontis (strain DSM 21063 / JCM 11548 / VA1) protein is Arginine decarboxylase proenzyme.